The chain runs to 147 residues: Hemoglobin subunit beta (147 aa).

Valine 2 bears the N-acetylvaline mark. The region spanning 3 to 147 (HLADDEKAAV…VSTALAHKYH (145 aa)) is the Globin domain. Position 45 is a phosphoserine (serine 45). At lysine 60 the chain carries N6-acetyllysine. Histidine 64 lines the heme b pocket. The residue at position 83 (lysine 83) is an N6-acetyllysine. Histidine 93 is a heme b binding site. Cysteine 94 bears the S-nitrosocysteine mark. Residue lysine 145 is modified to N6-acetyllysine.

The protein belongs to the globin family. As to quaternary structure, heterotetramer of two alpha chains and two beta chains. In terms of tissue distribution, red blood cells.

Involved in oxygen transport from the lung to the various peripheral tissues. This chain is Hemoglobin subunit beta (HBB), found in Bradypus tridactylus (Pale-throated three-toed sloth).